The following is a 1077-amino-acid chain: MAPRKRGGRGISFIFCCFRNNDHPEITYRLRNDSNFALQTMEPALPMPPVEELDVMFSELVDELDLTDKHREAMFALPAEKKWQIYCSKKKDQEENKGATSWPEFYIDQLNSMAARKSLLALEKEEEEERSKTIESLKTALRTKPMRFVTRFIDLDGLSCILNFLKTMDYETSESRIHTSLIGCIKALMNNSQGRAHVLAHSESINVIAQSLSTENIKTKVAVLEILGAVCLVPGGHKKVLQAMLHYQKYASERTRFQTLINDLDKSTGRYRDEVSLKTAIMSFINAVLSQGAGVESLDFRLHLRYEFLMLGIQPVIDKLREHENSTLDRHLDFFEMLRNEDELEFAKRFELVHIDTKSATQMFELTRRRLTHSEAYPHFMSILHHCLQMPYKRSGNTVQYWLLLDRIIQQIVIQNDKGQDPDSTPLENFNIKNVVRMLVNENEVKQWKEQAEKMRKEHNELQQKLEKKERECDAKTQEKEEMMQTLNKMKEKLEKETTEHKQVKQQVADLTAQLHELNRRAVCAAVPGGPSPGAPGGPFPSSGLGSLLPPPPPPLLSGGALPPPPPPLPPGGPPPPPGPPPLGGVLPPPGAPVSLTLKKKNIPQPTNALKSFNWSKLPENKLDGTVWTEIDDTKVFKILDLEDLERTFSAYQRQQEFFVNNSKQKEADAIDDTLSSKLKVKELSVIDGRRAQNCNILLSRLKLSNDEIKRAILTMDEQEDLPKDMLEQLLKFVPEKSDIDLLEEHKHELDRMAKADRFLFEMSRINHYQQRLQSLYFKKKFAERVAEVKPKVEAIRSGSEEVFRSRALKQLLEVVLAFGNYMNKGQRGNAYGFKISSLNKIADTKSSIDKNITLLHYLITIVENKYPKVLNLSEELRDIPQAAKVNMTELDKEISTLRSGLKAVETELEYQKSQPPQPGDKFVSVVSQFITLASFSFSDVEDLLAEAKELFTKAVKHFGEEAGKIQPDEFFGIFDQFLQAVAEAKQENENMRKRKEEEERRARLEAQLKEQRERERKVRKAKESSEESGEFDDLVSALRSGEVFDKDLSKLKRNRKRISNQVTDSSRERPITKLNF.

A Phosphoserine modification is found at Ser34. The region spanning 45-420 (LPMPPVEELD…QIVIQNDKGQ (376 aa)) is the GBD/FH3 domain. Positions 437 to 526 (RMLVNENEVK…ELNRRAVCAA (90 aa)) form a coiled coil. 2 disordered regions span residues 457 to 478 (KEHNELQQKLEKKERECDAKTQ) and 526 to 596 (AVPG…PVSL). The FH1 domain occupies 528-599 (PGGPSPGAPG…PGAPVSLTLK (72 aa)). 2 stretches are compositionally biased toward pro residues: residues 530–539 (GPSPGAPGGP) and 549–592 (LPPP…PPGA). Residues 600-1008 (KKNIPQPTNA…EERRARLEAQ (409 aa)) enclose the FH2 domain. The interval 693 to 702 (QNCNILLSRL) is actin-binding. Positions 1007–1026 (AQLKEQRERERKVRKAKESS) are enriched in basic and acidic residues. 2 disordered regions span residues 1007–1033 (AQLKEQRERERKVRKAKESSEESGEFD) and 1056–1077 (RKRISNQVTDSSRERPITKLNF). Phosphoserine occurs at positions 1026 and 1029. The 32-residue stretch at 1026–1057 (SEESGEFDDLVSALRSGEVFDKDLSKLKRNRK) folds into the DAD domain. Residues 1066 to 1077 (SSRERPITKLNF) are compositionally biased toward basic and acidic residues.

It belongs to the formin homology family. In terms of assembly, interacts with CIP4, FNBP1 and FNBP1L. Interacts with the SH3 domains of Abl, BTK, endophilin, spectrin and SRC. Binds specifically to GTP-bound CDC42 and RHOA. Interacts with INTU; INTU mediates the indirect interaction between DAAM1 and NPHP4. Interacts (via coiled coil domain) with KANK1 (via coiled coil domain). In terms of tissue distribution, in early embryogenesis, expressed in embryonic and extraembryonic ectoderm. In later stages of gastrulation, expressed also in somites and ribs and posterior vertebrae of developing skeletal system. During organogenesis, expressed in CNS, PNS, stomach, liver and limb bud.

Its subcellular location is the cytoplasm. The protein resides in the cytoskeleton. It localises to the cilium basal body. Its function is as follows. Binds to disheveled (Dvl) and Rho, and mediates Wnt-induced Dvl-Rho complex formation. May play a role as a scaffolding protein to recruit Rho-GDP and Rho-GEF, thereby enhancing Rho-GTP formation. Can direct nucleation and elongation of new actin filaments. Involved in building functional cilia. Involved in the organization of the subapical actin network in multiciliated epithelial cells. Together with DAAM2, required for myocardial maturation and sarcomere assembly. During cell division, may regulate RHOA activation that signals spindle orientation and chromosomal segregation. In Mus musculus (Mouse), this protein is Disheveled-associated activator of morphogenesis 1 (Daam1).